A 359-amino-acid polypeptide reads, in one-letter code: Biotin synthase (359 aa).

Positions 67–302 (CCGNRVDLCS…QQILRYAGGR (236 aa)) constitute a Radical SAM core domain. Cys-85, Cys-89, and Cys-92 together coordinate [4Fe-4S] cluster. [2Fe-2S] cluster-binding residues include Cys-130, Cys-167, Cys-227, and Arg-297.

It belongs to the radical SAM superfamily. Biotin synthase family. Homodimer. It depends on [4Fe-4S] cluster as a cofactor. [2Fe-2S] cluster serves as cofactor.

It catalyses the reaction (4R,5S)-dethiobiotin + (sulfur carrier)-SH + 2 reduced [2Fe-2S]-[ferredoxin] + 2 S-adenosyl-L-methionine = (sulfur carrier)-H + biotin + 2 5'-deoxyadenosine + 2 L-methionine + 2 oxidized [2Fe-2S]-[ferredoxin]. Its pathway is cofactor biosynthesis; biotin biosynthesis; biotin from 7,8-diaminononanoate: step 2/2. In terms of biological role, catalyzes the conversion of dethiobiotin (DTB) to biotin by the insertion of a sulfur atom into dethiobiotin via a radical-based mechanism. This is Biotin synthase from Gloeothece citriformis (strain PCC 7424) (Cyanothece sp. (strain PCC 7424)).